Here is a 386-residue protein sequence, read N- to C-terminus: Demethylsterigmatocystin 6-O-methyltransferase (386 aa).

137-150 serves as a coordination point for substrate; the sequence is FDISGPCTQILPDF. A substrate binding region spans residues 177 to 197; the sequence is MFEWMPQHPKHMESLGHLMAL. Residues 228-229, D253, 273-274, and R289 each bind S-adenosyl-L-methionine; these read GG and NF. H293 functions as the Proton acceptor in the catalytic mechanism.

It belongs to the class I-like SAM-binding methyltransferase superfamily. Cation-independent O-methyltransferase family. COMT subfamily.

It catalyses the reaction 6-demethylsterigmatocystin + S-adenosyl-L-methionine = sterigmatocystin + S-adenosyl-L-homocysteine + H(+). Its pathway is mycotoxin biosynthesis; aflatoxin biosynthesis. In terms of biological role, demethylsterigmatocystin 6-O-methyltransferase; part of the gene cluster that mediates the biosynthesis of aflatoxins, a group of polyketide-derived furanocoumarins, and part of the most toxic and carcinogenic compounds among the known mycotoxins. The four major aflatoxins produced by A.parasiticus are aflatoxin B1 (AFB1), aflatoxin B2 (AFB2), aflatoxin G1 (AFG1) and aflatoxin G2 (AFG2). Within the aflatoxin pathway, the methyltransferase aflO then catalyzes the modification of demethylsterigmatocystin (DMST) to sterigmatocystin (ST), and of dihydrodemethylsterigmatocystin (DMDHST) to dihydrosterigmatocystin (DHST). The biosynthesis of aflatoxins begins with the norsolorinic acid synthase aflC that combines a hexanoyl starter unit produced by the fatty acid synthase aflA/aflB and 7 malonyl-CoA extender units to synthesize the precursor NOR. The second step is the conversion of NOR to averantin and requires the norsolorinic acid ketoreductase aflD, which catalyzes the dehydration of norsolorinic acid to form (1'S)-averantin. The norsolorinic acid reductases aflE and aflF may also play a role in the conversion of NOR to AVN. The cytochrome P450 monooxygenase aflG then catalyzes the hydroxylation of AVN to 5'hydroxyaverantin (HAVN). The next step is performed by the 5'-hydroxyaverantin dehydrogenase aflH that transforms HAVN to 5'-oxoaverantin (OAVN) which is further converted to averufin (AVF) by aflK that plays a dual role in the pathway, as a 5'-oxoaverantin cyclase that mediates conversion of 5'-oxoaverantin, as well as a versicolorin B synthase in a later step in the pathway. The averufin oxidase aflI catalyzes the conversion of AVF to versiconal hemiacetal acetate (VHA). VHA is then the substrate for the versiconal hemiacetal acetate esterase aflJ to yield versiconal (VAL). Versicolorin B synthase aflK then converts VAL to versicolorin B (VERB) by closing the bisfuran ring of aflatoxin which is required for DNA-binding, thus giving to aflatoxin its activity as a mutagen. Then, the activity of the versicolorin B desaturase aflL leads to versicolorin A (VERA). A branch point starts from VERB since it can also be converted to dihydrodemethylsterigmatocystin (DMDHST), probably also by aflL, VERA being a precursor for aflatoxins B1 and G1, and DMDHST for aflatoxins B2 and G2. Next, the versicolorin reductase aflM and the cytochrome P450 monooxygenase aflN are involved in conversion of VERA to demethylsterigmatocystin (DMST). AflX and aflY seem also involved in this step, through probable aflX-mediated epoxide ring-opening step following versicolorin A oxidation and aflY-mediated Baeyer-Villiger oxidation required for the formation of the xanthone ring. The methyltransferase aflO then leads to the modification of DMST to sterigmatocystin (ST), and of DMDHST to dihydrosterigmatocystin (DHST). Both ST and DHST are then substrates of the O-methyltransferase aflP to yield O-methylsterigmatocystin (OMST) and dihydro-O-methylsterigmatocystin (DHOMST), respectively. Finally OMST is converted to aflatoxins B1 and G1, and DHOMST to aflatoxins B2 and G2, via the action of several enzymes including O-methylsterigmatocystin oxidoreductase aflQ, the cytochrome P450 monooxygenase aflU, but also the NADH-dependent flavin oxidoreductase nadA which is specifically required for the synthesis of AFG1. The sequence is that of Demethylsterigmatocystin 6-O-methyltransferase from Aspergillus parasiticus (strain ATCC 56775 / NRRL 5862 / SRRC 143 / SU-1).